A 954-amino-acid polypeptide reads, in one-letter code: Glycine dehydrogenase (decarboxylating) (954 aa).

N6-(pyridoxal phosphate)lysine is present on K704.

The protein belongs to the GcvP family. The glycine cleavage system is composed of four proteins: P, T, L and H. Pyridoxal 5'-phosphate serves as cofactor.

The enzyme catalyses N(6)-[(R)-lipoyl]-L-lysyl-[glycine-cleavage complex H protein] + glycine + H(+) = N(6)-[(R)-S(8)-aminomethyldihydrolipoyl]-L-lysyl-[glycine-cleavage complex H protein] + CO2. Functionally, the glycine cleavage system catalyzes the degradation of glycine. The P protein binds the alpha-amino group of glycine through its pyridoxal phosphate cofactor; CO(2) is released and the remaining methylamine moiety is then transferred to the lipoamide cofactor of the H protein. The polypeptide is Glycine dehydrogenase (decarboxylating) (Sinorhizobium medicae (strain WSM419) (Ensifer medicae)).